Here is a 441-residue protein sequence, read N- to C-terminus: Putative serine/threonine-protein kinase F31E3.2 (441 aa).

Basic residues predominate over residues 1 to 16 (MGNVATRKRPGCHHHI). Residues 1–41 (MGNVATRKRPGCHHHIGRNEENLDDDEDGPAKKRLRIGEPQ) are disordered. The Protein kinase domain maps to 126 to 381 (FVLERQLGRG…FTVLHAHPFF (256 aa)). ATP-binding positions include 132–140 (LGRGSFGVV) and K156. D253 (proton acceptor) is an active-site residue.

Belongs to the protein kinase superfamily. Ser/Thr protein kinase family.

The enzyme catalyses L-seryl-[protein] + ATP = O-phospho-L-seryl-[protein] + ADP + H(+). The catalysed reaction is L-threonyl-[protein] + ATP = O-phospho-L-threonyl-[protein] + ADP + H(+). The protein is Putative serine/threonine-protein kinase F31E3.2 of Caenorhabditis elegans.